The primary structure comprises 591 residues: Pentatricopeptide repeat-containing protein At2g35130 (591 aa).

12 PPR repeats span residues Asp154 to Pro188, Thr189 to Pro223, Gly227 to Pro262, Thr263 to Pro297, Asn298 to Pro332, Asp333 to Pro367, Asp368 to Pro402, Thr403 to Pro437, Asp438 to Ala472, Asp473 to Pro507, Asp508 to Pro542, and Asp543 to Gly573.

The protein belongs to the PPR family. P subfamily.

The protein is Pentatricopeptide repeat-containing protein At2g35130 of Arabidopsis thaliana (Mouse-ear cress).